The chain runs to 514 residues: Embryonic protein UVS.2 (514 aa).

Residues 1–19 (MDVKISAILLACIIQYAVS) form the signal peptide. The 197-residue stretch at 90–286 (SAINDARFLW…SKINKLYECN (197 aa)) folds into the Peptidase M12A domain. An N-linked (GlcNAc...) asparagine glycan is attached at Asn112. Disulfide bonds link Cys137/Cys285, Cys158/Cys178, Cys288/Cys314, Cys340/Cys363, Cys402/Cys428, and Cys455/Cys475. Residue His186 participates in Zn(2+) binding. Glu187 is an active-site residue. Zn(2+) is bound by residues His190 and His196. The N-linked (GlcNAc...) asparagine glycan is linked to Asn199. 2 consecutive CUB domains span residues 288–400 (CSNL…YGSI) and 402–513 (CGGA…YTFV). Residues Asn421, Asn427, and Asn464 are each glycosylated (N-linked (GlcNAc...) asparagine).

It depends on Zn(2+) as a cofactor.

The polypeptide is Embryonic protein UVS.2 (Xenopus laevis (African clawed frog)).